The chain runs to 510 residues: MEEIRRYLQLERSQQHDFLYPLIFQEYIYAFAHDRGFSRSILLENENPGYDNKSSLLVMKRLITRMYQQNHFLISPNDFNQKNPFFAHNKNLYSQIIAEGFAFIVEIPFSLRLISEGKKKKIVKSQNLRSIHSIFPFLEDNFSYLNFVLDILIPHPVHVEILVQTLRYWVKDASSLHLLRFFLNKYWNSLITPKKASSSFSTRNQRLFVFLYNSHVSEYESSFVFLRNQSSHLGSTPFGVLLERIYFYGKIERLVNVFVKVKDFRANLWLVKEPCIHYIRYQRKFILASKGTSLFMNKWKCYLITFWQWHFSLWFYPRRIYINQLSNHSFAFLGYLSSLRMNPSVVRSQSLENAFLINNAIKKVDTLVPIIPMIASLAKAKFCNVFGHPISKPVRADLSDSNIIDRFGCICRNFSHYYSGSSKKKSLYRIKYILRLSCARTLARKHKSTVRTFLKKLGSELLEEFLLSEEDVLFLTFPKASPSLQGVYRSRIWYLDIISINDLVDHKSKF.

This sequence belongs to the intron maturase 2 family. MatK subfamily.

The protein localises to the plastid. In terms of biological role, usually encoded in the trnK tRNA gene intron. Probably assists in splicing its own and other chloroplast group II introns. This is Maturase K from Bartsia alpina (Velvet bells).